We begin with the raw amino-acid sequence, 90 residues long: Progonadoliberin-3 (90 aa).

Positions 1–23 (MEANSRVMVRVLLLALVVQVTLS) are cleaved as a signal peptide. Glutamine 24 carries the post-translational modification Pyrrolidone carboxylic acid. Glycine 33 is modified (glycine amide). The interval 56–90 (LPEEASAQTQERLRPYNVINDDSSHFDRKKRSPNK) is disordered.

The protein belongs to the GnRH family.

It localises to the secreted. Functionally, stimulates the secretion of gonadotropins. The sequence is that of Progonadoliberin-3 (gnrh3) from Dicentrarchus labrax (European seabass).